The following is a 257-amino-acid chain: NAD-dependent protein deacylase (257 aa).

The region spanning 1–252 (MLGHAAKLLA…LRRVKDIMAE (252 aa)) is the Deacetylase sirtuin-type domain. Position 20–39 (20–39 (GAGISAESGIPTFRGRNGLW)) interacts with NAD(+). Tyr64 and Arg67 together coordinate substrate. 98 to 101 (QNVD) provides a ligand contact to NAD(+). His116 acts as the Proton acceptor in catalysis. 4 residues coordinate Zn(2+): Cys124, Cys127, Cys151, and Cys154. NAD(+) is bound by residues 191 to 193 (GTS), 217 to 219 (NVE), and Ala235.

It belongs to the sirtuin family. Class III subfamily. The cofactor is Zn(2+).

It is found in the cytoplasm. The enzyme catalyses N(6)-acetyl-L-lysyl-[protein] + NAD(+) + H2O = 2''-O-acetyl-ADP-D-ribose + nicotinamide + L-lysyl-[protein]. It catalyses the reaction N(6)-succinyl-L-lysyl-[protein] + NAD(+) + H2O = 2''-O-succinyl-ADP-D-ribose + nicotinamide + L-lysyl-[protein]. Functionally, NAD-dependent lysine deacetylase and desuccinylase that specifically removes acetyl and succinyl groups on target proteins. Modulates the activities of several proteins which are inactive in their acylated form. Deacetylates the N-terminal lysine residue of Alba, the major archaeal chromatin protein and that, in turn, increases Alba's DNA binding affinity, thereby repressing transcription. This is NAD-dependent protein deacylase from Thermococcus kodakarensis (strain ATCC BAA-918 / JCM 12380 / KOD1) (Pyrococcus kodakaraensis (strain KOD1)).